Reading from the N-terminus, the 475-residue chain is MAALTTLFKYIDENQDRYIKKLAKWVAIQSVSAWPEKRGEIRRMMEVAAADVKQLGGSVELVDIGKQKLPDGSEIPLPPILLGRLGSDPQKKTVCIYGHLDVQPAALEDGWDSEPFTLVERDGKLHGRGSTDDKGPVAGWINALEAYQKTDQEIPVNVRFCLEGMEESGSEGLDELIFAQKDTFFKDVDYVCISDNYWLGKKKPCITYGLRGICYFFIEVECSNKDLHSGVYGGSVHEAMTDLILLMGSLVDKRGNILIPGINEAVAAVTEEEHKLYDDIDFDIEEFAKDVGAQILLHSNKKDILMHRWRYPSLSLHGIEGAFSGSGAKTVIPRKVVGKFSIRLVPNMTPEVVSEQVTSYLTKKFAELRSPNEFKVYMGHGGKPWVSDFSHPHYVAGRRAMRTVFGVEPDLTREGGSIPVTLTFQEATGKNVMLLPVGSADDGAHSQNEKLNRHNYIEGTKMLAAYLYEVSQLKD.

Alanine 2 bears the N-acetylalanine mark. Lysine 9 carries the N6-acetyllysine modification. Serine 58 is subject to Phosphoserine. Mn(2+) is bound at residue histidine 99. Residue aspartate 101 is part of the active site. A Mn(2+)-binding site is contributed by aspartate 132. The active-site Proton acceptor is glutamate 166. Substrate-binding positions include 166–167 (EE), aspartate 195, and histidine 228. Residues glutamate 167 and aspartate 195 each contribute to the Mn(2+) site. Residue serine 299 is modified to Phosphoserine. Positions 330, 343, 417, and 445 each coordinate substrate. Histidine 445 contributes to the Mn(2+) binding site.

It belongs to the peptidase M20A family. In terms of assembly, homodimer. Mn(2+) is required as a cofactor.

The protein resides in the cytoplasm. The catalysed reaction is Hydrolysis of dipeptides, preferentially hydrophobic dipeptides including prolyl amino acids.. It catalyses the reaction L-threonyl-L-threonine + H2O = 2 L-threonine. The enzyme catalyses L-threonyl-L-serine + H2O = L-threonine + L-serine. It carries out the reaction L-seryl-L-threonine + H2O = L-threonine + L-serine. The catalysed reaction is L-cysteinylglycine + H2O = L-cysteine + glycine. It catalyses the reaction (S)-lactate + L-phenylalanine = N-[(S)-lactoyl]-L-phenylalanine + H2O. Catalyzes the peptide bond hydrolysis in dipeptides, displaying a non-redundant activity toward threonyl dipeptides. Mediates threonyl dipeptide catabolism in a tissue-specific way. Has high dipeptidase activity toward cysteinylglycine, an intermediate metabolite in glutathione metabolism. Metabolizes N-lactoyl-amino acids, both through hydrolysis to form lactic acid and amino acids, as well as through their formation by reverse proteolysis. Plays a role in the regulation of cell cycle arrest and apoptosis. The polypeptide is Cytosolic non-specific dipeptidase (CNDP2) (Pongo abelii (Sumatran orangutan)).